The sequence spans 86 residues: Large ribosomal subunit protein bL31B (86 aa).

This sequence belongs to the bacterial ribosomal protein bL31 family. Type B subfamily. In terms of assembly, part of the 50S ribosomal subunit.

The chain is Large ribosomal subunit protein bL31B from Streptococcus pyogenes serotype M1.